The primary structure comprises 162 residues: Lipoprotein signal peptidase (162 aa).

Helical transmembrane passes span 56-76 (FLPP…VVWY) and 84-104 (SPLF…NLID). Residues aspartate 113 and aspartate 139 contribute to the active site. A helical transmembrane segment spans residues 132-152 (WPIFNVADSCITIGACMIVLF).

Belongs to the peptidase A8 family.

The protein localises to the cell inner membrane. It catalyses the reaction Release of signal peptides from bacterial membrane prolipoproteins. Hydrolyzes -Xaa-Yaa-Zaa-|-(S,diacylglyceryl)Cys-, in which Xaa is hydrophobic (preferably Leu), and Yaa (Ala or Ser) and Zaa (Gly or Ala) have small, neutral side chains.. The protein operates within protein modification; lipoprotein biosynthesis (signal peptide cleavage). This protein specifically catalyzes the removal of signal peptides from prolipoproteins. In Chlorobaculum tepidum (strain ATCC 49652 / DSM 12025 / NBRC 103806 / TLS) (Chlorobium tepidum), this protein is Lipoprotein signal peptidase.